The primary structure comprises 350 residues: Induced myeloid leukemia cell differentiation protein Mcl-1 (350 aa).

Residues lysine 5 and lysine 40 each participate in a glycyl lysine isopeptide (Lys-Gly) (interchain with G-Cter in ubiquitin) cross-link. A disordered region spans residues 47–87 (EIGGGEAGAVIGGSAGASPPSTLTPDSRRVARPPPIGAEVP). Residues 50 to 61 (GGEAGAVIGGSA) are compositionally biased toward gly residues. Residues 104-175 (RAAPLEEMEA…PAEEEEDELY (72 aa)) are PEST-like. Position 121 is a phosphoserine (serine 121). Lysine 136 participates in a covalent cross-link: Glycyl lysine isopeptide (Lys-Gly) (interchain with G-Cter in ubiquitin). The disordered stretch occupies residues 148-171 (GESGNNTSTDGSLPSTPPPAEEEE). Positions 150 to 161 (SGNNTSTDGSLP) are enriched in polar residues. The residue at position 159 (serine 159) is a Phosphoserine; by GSK3-alpha and GSK3-beta. Serine 162 carries the post-translational modification Phosphoserine. Residue threonine 163 is modified to Phosphothreonine; by MAPK. Residues lysine 194 and lysine 197 each participate in a glycyl lysine isopeptide (Lys-Gly) (interchain with G-Cter in ubiquitin) cross-link. Residues 209–223 (ALETLRRVGDGVQRN) carry the BH3 motif. The BH1 signature appears at 252 to 272 (HVFSDGVTNWGRIVTLISFGA). The BH2 signature appears at 304 to 319 (DWLVKQRGWDGFVEFF). Residues 328 to 348 (IRNVLLAFAGVAGVGAGLAYL) form a helical membrane-spanning segment.

This sequence belongs to the Bcl-2 family. As to quaternary structure, interacts with HIF3A (via C-terminus domain). Interacts with BAD, BOK, BIK and BMF. Interacts with PMAIP1. Interacts with BBC3. Isoform 1 interacts with BAX, BAK1 and TPT1. Heterodimer of isoform 1 and isoform 2. Homodimers of isoform 1 or isoform 2 are not detected. Isoform 2 does not interact with pro-apoptotic BCL2-related proteins. Interacts with RTL10/BOP. Interacts with BCL2L11; may sequester BCL2L11 to prevent its pro-apoptotic activity. Interacts with GIMAP5 and HSPA8/HSC70; the interaction between HSPA8 and MCL1 is impaired in the absence of GIMAP5. Cleaved by CASP3 during apoptosis. In intact cells cleavage occurs preferentially after Asp-127, yielding a pro-apoptotic 28 kDa C-terminal fragment. Post-translationally, rapidly degraded in the absence of phosphorylation on Thr-163 in the PEST region. In terms of processing, phosphorylated on Ser-159, by GSK3, in response to IL3/interleukin-3 withdrawal. Phosphorylation at Ser-159 induces ubiquitination and proteasomal degradation, abrogating the anti-apoptotic activity. Treatment with taxol or okadaic acid induces phosphorylation on additional sites. Ubiquitinated. Ubiquitination is induced by phosphorylation at Ser-159. Deubiquitinated by USP20; leading to increased stability.

The protein localises to the membrane. Its subcellular location is the cytoplasm. It is found in the mitochondrion. The protein resides in the nucleus. It localises to the nucleoplasm. Functionally, involved in the regulation of apoptosis versus cell survival, and in the maintenance of viability but not of proliferation. Mediates its effects by interactions with a number of other regulators of apoptosis. Isoform 1 inhibits apoptosis. Isoform 2 promotes apoptosis. In Homo sapiens (Human), this protein is Induced myeloid leukemia cell differentiation protein Mcl-1 (MCL1).